A 62-amino-acid chain; its full sequence is Large ribosomal subunit protein uL29 (62 aa).

This sequence belongs to the universal ribosomal protein uL29 family.

In Ruthia magnifica subsp. Calyptogena magnifica, this protein is Large ribosomal subunit protein uL29.